The following is a 399-amino-acid chain: Elongation factor Tu (399 aa).

Residues 10 to 209 (KPHVNIGTIG…AVDSYIPTPV (200 aa)) form the tr-type G domain. The interval 19–26 (GHVDHGKT) is G1. 19–26 (GHVDHGKT) contacts GTP. A Mg(2+)-binding site is contributed by T26. A G2 region spans residues 60–64 (GITIA). Residues 81–84 (DCPG) are G3. Residues 81–85 (DCPGH) and 136–139 (NKAD) contribute to the GTP site. Residues 136–139 (NKAD) form a G4 region. A G5 region spans residues 174 to 176 (SAL).

The protein belongs to the TRAFAC class translation factor GTPase superfamily. Classic translation factor GTPase family. EF-Tu/EF-1A subfamily. As to quaternary structure, monomer.

Its subcellular location is the cytoplasm. The enzyme catalyses GTP + H2O = GDP + phosphate + H(+). In terms of biological role, GTP hydrolase that promotes the GTP-dependent binding of aminoacyl-tRNA to the A-site of ribosomes during protein biosynthesis. In Campylobacter concisus (strain 13826), this protein is Elongation factor Tu.